The sequence spans 304 residues: Lipoyl synthase (304 aa).

[4Fe-4S] cluster-binding residues include Cys-41, Cys-46, Cys-52, Cys-68, Cys-72, Cys-75, and Ser-281. The 217-residue stretch at Gly-54–Lys-270 folds into the Radical SAM core domain. The tract at residues Tyr-282–Asn-304 is disordered.

It belongs to the radical SAM superfamily. Lipoyl synthase family. [4Fe-4S] cluster serves as cofactor.

Its subcellular location is the cytoplasm. It carries out the reaction [[Fe-S] cluster scaffold protein carrying a second [4Fe-4S](2+) cluster] + N(6)-octanoyl-L-lysyl-[protein] + 2 oxidized [2Fe-2S]-[ferredoxin] + 2 S-adenosyl-L-methionine + 4 H(+) = [[Fe-S] cluster scaffold protein] + N(6)-[(R)-dihydrolipoyl]-L-lysyl-[protein] + 4 Fe(3+) + 2 hydrogen sulfide + 2 5'-deoxyadenosine + 2 L-methionine + 2 reduced [2Fe-2S]-[ferredoxin]. Its pathway is protein modification; protein lipoylation via endogenous pathway; protein N(6)-(lipoyl)lysine from octanoyl-[acyl-carrier-protein]. In terms of biological role, catalyzes the radical-mediated insertion of two sulfur atoms into the C-6 and C-8 positions of the octanoyl moiety bound to the lipoyl domains of lipoate-dependent enzymes, thereby converting the octanoylated domains into lipoylated derivatives. In Staphylococcus epidermidis (strain ATCC 35984 / DSM 28319 / BCRC 17069 / CCUG 31568 / BM 3577 / RP62A), this protein is Lipoyl synthase.